The chain runs to 198 residues: DnaJ homolog subfamily C member 5 (198 aa).

A phosphoserine mark is found at S8, S10, S12, and S15. One can recognise a J domain in the interval 13–82; it reads GESLYHVLGL…RNIYDKYGSL (70 aa). Phosphotyrosine is present on Y17. Position 56 is an N6-acetyllysine (K56). S151 is subject to Phosphoserine.

As to quaternary structure, homodimer. Interacts with the chaperone complex consisting of HSC70 and SGTA. Interacts with ZDHHC13 (via ANK repeats). Interacts with ZDHHC17 (via ANK repeats). Interacts with SYT1, SYT5 and SYT7, and with SYT9, forming a complex with SNAP25. The interaction with SYT9 is stimulated tenfold in presence of calcium. In terms of processing, formation of the chaperone complex DNAJC5/HSC70 is not regulated by phosphorylation. Ser-10 phosphorylation induces an order-to-disorder transition triggering the interaction with Lys-58. This conformational switch modulates DNAJC5's cellular functions by reducing binding to syntaxin and synaptogamin without altering HSC70 interactions. Palmitoylated. Could be palmitoylated by DHHC3, DHHC7, DHHC15 and DHHC17. Palmitoylation occurs probably in the cysteine-rich domain and regulates DNAJC5 membrane attachment.

It localises to the cytoplasm. It is found in the cytosol. Its subcellular location is the membrane. The protein resides in the cytoplasmic vesicle. The protein localises to the secretory vesicle. It localises to the chromaffin granule membrane. It is found in the melanosome. Its subcellular location is the cell membrane. Acts as a co-chaperone for the SNARE protein SNAP-25. Involved in the calcium-mediated control of a late stage of exocytosis. Acts as a general chaperone in regulated exocytosis. May have an important role in presynaptic function. May be involved in calcium-dependent neurotransmitter release at nerve endings. In Mus musculus (Mouse), this protein is DnaJ homolog subfamily C member 5.